A 440-amino-acid chain; its full sequence is D-serine dehydratase (440 aa).

The residue at position 116 (Lys116) is an N6-(pyridoxal phosphate)lysine.

It belongs to the serine/threonine dehydratase family. DsdA subfamily. As to quaternary structure, monomer. Requires pyridoxal 5'-phosphate as cofactor.

The enzyme catalyses D-serine = pyruvate + NH4(+). The sequence is that of D-serine dehydratase from Salmonella agona (strain SL483).